A 450-amino-acid polypeptide reads, in one-letter code: Enolase (450 aa).

(2R)-2-phosphoglycerate is bound at residue Gln167. Residue Glu209 is the Proton donor of the active site. Mg(2+) is bound by residues Asp250, Glu307, and Asp334. Residues Lys359, Arg388, Ser389, and Lys410 each contribute to the (2R)-2-phosphoglycerate site. The Proton acceptor role is filled by Lys359.

The protein belongs to the enolase family. Requires Mg(2+) as cofactor.

It is found in the cytoplasm. The protein resides in the secreted. The protein localises to the cell surface. It carries out the reaction (2R)-2-phosphoglycerate = phosphoenolpyruvate + H2O. The protein operates within carbohydrate degradation; glycolysis; pyruvate from D-glyceraldehyde 3-phosphate: step 4/5. Functionally, catalyzes the reversible conversion of 2-phosphoglycerate (2-PG) into phosphoenolpyruvate (PEP). It is essential for the degradation of carbohydrates via glycolysis. Its function is as follows. 'Moonlights' as a plasminogen receptor and plasmin activator. Contributes to host (pig) cell adhesion; anti-enolase antibodies decrease binding to porcine kidney cells about 60%. Binds host plasminogen and fibronectin in vitro; enhances the activity of host tissue-specific plasminogen activator (tPA), and helps plasminogen and tPA degrade articifial host extracellular matrices. In Mesomycoplasma hyorhinis (strain HUB-1) (Mycoplasma hyorhinis), this protein is Enolase.